The following is a 461-amino-acid chain: CBL-interacting protein kinase 1 (461 aa).

The Protein kinase domain maps to 19–274 (YEIGRTLGEG…IAGIKEHEWF (256 aa)). Residues 25–33 (LGEGNFGKV) and Lys-48 each bind ATP. Asp-142 serves as the catalytic Proton acceptor. The interval 160–189 (DFGLSALPQHLGNDGLLHTTCGSPNYIAPE) is activation loop. In terms of domain architecture, NAF spans 308–332 (EKPTHINAFQLIGMASALDLSGFFE). Residues 338–367 (QRKIRFTSTHSPKDLFDKIENVVTEMGFQV) form a PPI region.

The protein belongs to the protein kinase superfamily. CAMK Ser/Thr protein kinase family. SNF1 subfamily. Mn(2+) is required as a cofactor.

The catalysed reaction is L-seryl-[protein] + ATP = O-phospho-L-seryl-[protein] + ADP + H(+). The enzyme catalyses L-threonyl-[protein] + ATP = O-phospho-L-threonyl-[protein] + ADP + H(+). Its function is as follows. CIPK serine-threonine protein kinases interact with CBL proteins. Binding of a CBL protein to the regulatory NAF domain of CIPK protein lead to the activation of the kinase in a calcium-dependent manner. The protein is CBL-interacting protein kinase 1 (CIPK1) of Oryza sativa subsp. japonica (Rice).